The following is a 250-amino-acid chain: Ribosomal RNA small subunit methyltransferase J (250 aa).

S-adenosyl-L-methionine-binding positions include 101 to 102 (RD), 117 to 118 (ER), 153 to 154 (SS), and Asp171.

It belongs to the methyltransferase superfamily. RsmJ family.

Its subcellular location is the cytoplasm. The catalysed reaction is guanosine(1516) in 16S rRNA + S-adenosyl-L-methionine = N(2)-methylguanosine(1516) in 16S rRNA + S-adenosyl-L-homocysteine + H(+). Specifically methylates the guanosine in position 1516 of 16S rRNA. The polypeptide is Ribosomal RNA small subunit methyltransferase J (Escherichia coli O81 (strain ED1a)).